A 648-amino-acid polypeptide reads, in one-letter code: Proton myo-inositol cotransporter (648 aa).

Over 1-76 (MSRKASENVE…AARRQFQQDE (76 aa)) the chain is Cytoplasmic. Phosphoserine occurs at positions 6, 47, and 50. A helical membrane pass occupies residues 77–97 (TPAFVYVVAVFSALGGFLFGY). Over 98–125 (DTGVVSGAMLLLKRQLSLDALWQELLVS) the chain is Extracellular. A helical transmembrane segment spans residues 126 to 146 (STVGAAAVSALAGGALNGVFG). Residues 147–148 (RR) lie on the Cytoplasmic side of the membrane. The helical transmembrane segment at 149-169 (AAILLASALFTAGSAVLAAAN) threads the bilayer. The Extracellular segment spans residues 170-178 (NKETLLAGR). The chain crosses the membrane as a helical span at residues 179 to 199 (LVVGLGIGIASMTVPVYIAEV). Over 200 to 212 (SPPNLRGRLVTIN) the chain is Cytoplasmic. A helical transmembrane segment spans residues 213–233 (TLFITGGQFFASVVDGAFSYL). Residues 234-239 (QKDGWR) lie on the Extracellular side of the membrane. The chain crosses the membrane as a helical span at residues 240 to 260 (YMLGLAAVPAVIQFFGFLFLP). Residues 261 to 324 (ESPRWLIQKG…RMLSYPPTRR (64 aa)) are Cytoplasmic-facing. The helical transmembrane segment at 325 to 345 (ALIVGCGLQMFQQLSGINTIM) threads the bilayer. Residues 346-363 (YYSATILQMSGVEDDRLA) are Extracellular-facing. Residues 364-384 (IWLASVTAFTNFIFTLVGVWL) traverse the membrane as a helical segment. Residues 385 to 393 (VEKVGRRKL) lie on the Cytoplasmic side of the membrane. The helical transmembrane segment at 394 to 414 (TFGSLAGTTVALIILALGFVL) threads the bilayer. The Extracellular segment spans residues 415–508 (SAQVSPRITF…NFCPTPYSWT (94 aa)). Residues N433, N458, and N485 are each glycosylated (N-linked (GlcNAc...) asparagine). Residues 509–529 (ALLGLILYLVFFAPGMGPMPW) traverse the membrane as a helical segment. Over 530-549 (TVNSEIYPLWARSTGNACSS) the chain is Cytoplasmic. The chain crosses the membrane as a helical span at residues 550–570 (GINWIFNVLVSLTFLHTAEYL). Over 571–573 (TYY) the chain is Extracellular. A helical membrane pass occupies residues 574 to 594 (GAFFLYAGFAAVGLLFIYGCL). The Cytoplasmic portion of the chain corresponds to 595–648 (PETKGKKLEEIESLFDNRLCTCGTSDSDEGRYIEYIRVKGSNYHLSDNDASDVE). Phosphoserine occurs at positions 640 and 645.

Belongs to the major facilitator superfamily. Sugar transporter (TC 2.A.1.1) family. In terms of processing, glycosylated. As to expression, predominantly expressed in the brain.

The protein resides in the cell membrane. The enzyme catalyses myo-inositol(out) + H(+)(out) = myo-inositol(in) + H(+)(in). Functionally, h(+)-myo-inositol cotransporter. Can also transport related stereoisomers. The sequence is that of Proton myo-inositol cotransporter from Homo sapiens (Human).